Reading from the N-terminus, the 255-residue chain is Hydroxyacylglutathione hydrolase (255 aa).

Zn(2+)-binding residues include His56, His58, Asp60, His61, His114, Asp133, and His171.

It belongs to the metallo-beta-lactamase superfamily. Glyoxalase II family. Monomer. The cofactor is Zn(2+).

The catalysed reaction is an S-(2-hydroxyacyl)glutathione + H2O = a 2-hydroxy carboxylate + glutathione + H(+). It functions in the pathway secondary metabolite metabolism; methylglyoxal degradation; (R)-lactate from methylglyoxal: step 2/2. In terms of biological role, thiolesterase that catalyzes the hydrolysis of S-D-lactoyl-glutathione to form glutathione and D-lactic acid. This Bradyrhizobium sp. (strain ORS 278) protein is Hydroxyacylglutathione hydrolase.